The primary structure comprises 162 residues: uncharacterized protein (162 aa).

An N-terminal signal peptide occupies residues 1–34 (MRKKNNIKKWLLIIAGFLIICIITLFVMVSGNKV).

This is an uncharacterized protein from Bacillus subtilis (strain 168).